A 605-amino-acid chain; its full sequence is METHIGSVDGAAAAADNGAVGCPASAVGCPMTSARPAPVSAGEASLGRHLARRLVQVGVSDVFAVPGDFNLTLLDHLIAEPGLRLVGCCNELNAGYAADGYARARGVGACAVTFTVGGLSVLNAIAGAYSENLPVICIAGGPNSNDYGTNRILHHTIGLPDFSQELRCFQTVTCHQAVVTNLEDAHEQIDTAIATALRESKPVYLSISCNLPGLPHPTFSRDPVPFFLAPRLSNKMGLEAAVEATVEFLNKAVKPVLVGGPKLRVAKAGKAFVDLVDASGYAYAVMPSAKGLVPETHPHFIGTYWGAVSTAFCAEIVESADAYLFAGPIFNDYSSVGYSFLLKKDKAIIVQPERVIVGNGPAFGCVMMKEFLSELAKRVNKNTTAYENYKRIFVPEGQPLESEPNEPLRVNVLFKHVQKMLNSDSAVIAETGDSWFNCQKLKLPEGCGYEFQMQYGSIGWSVGALLGYAQGAKDKRVIACIGDGSFQVTAQDVSTMIRCAQNSIIFLINNGGYTIEVEIHDGPYNVIKNWNYTGLVDAIHNGEGKCWTSKVKCEEELTEAIGMALGEKDCLCFIEVIAHKDDTSKELLEWGSRVSAANSRPPNPQ.

Substrate contacts are provided by aspartate 68 and histidine 155. Residues 433–515 (DSWFNCQKLK…FLINNGGYTI (83 aa)) are thiamine pyrophosphate binding. Mg(2+) is bound by residues aspartate 483, asparagine 510, and glycine 512. Glutamate 516 is a binding site for substrate.

This sequence belongs to the TPP enzyme family. In terms of assembly, homotetramer. The cofactor is a metal cation. Thiamine diphosphate is required as a cofactor.

It catalyses the reaction a 2-oxocarboxylate + H(+) = an aldehyde + CO2. The chain is Pyruvate decarboxylase 2 (PDC2) from Oryza sativa subsp. japonica (Rice).